Consider the following 154-residue polypeptide: Transcriptional repressor NrdR (154 aa).

Residues 1–22 are disordered; the sequence is MECPNCHKNASRVIDSRPSDEN. A zinc finger lies at 3-34; sequence CPNCHKNASRVIDSRPSDENRAIRRRRECENC. The ATP-cone domain occupies 49-139; sequence LLVVKNDGTR…IYRQFKDVSG (91 aa).

The protein belongs to the NrdR family. Zn(2+) serves as cofactor.

Functionally, negatively regulates transcription of bacterial ribonucleotide reductase nrd genes and operons by binding to NrdR-boxes. In Lactobacillus johnsonii (strain CNCM I-12250 / La1 / NCC 533), this protein is Transcriptional repressor NrdR.